A 100-amino-acid polypeptide reads, in one-letter code: Urease subunit gamma (100 aa).

This sequence belongs to the urease gamma subunit family. In terms of assembly, heterotrimer of UreA (gamma), UreB (beta) and UreC (alpha) subunits. Three heterotrimers associate to form the active enzyme.

Its subcellular location is the cytoplasm. The catalysed reaction is urea + 2 H2O + H(+) = hydrogencarbonate + 2 NH4(+). It participates in nitrogen metabolism; urea degradation; CO(2) and NH(3) from urea (urease route): step 1/1. The protein is Urease subunit gamma of Rhizobium rhizogenes (strain K84 / ATCC BAA-868) (Agrobacterium radiobacter).